We begin with the raw amino-acid sequence, 318 residues long: Decaprenyl-phosphate phosphoribosyltransferase (318 aa).

2 helical membrane passes run 33-53 (WIKN…GIEY) and 59-79 (AAKV…IYLI). 5-phospho-alpha-D-ribose 1-diphosphate contacts are provided by Lys35 and Tyr77. Mg(2+)-binding residues include Asn80 and Asp84. Lys94 is a binding site for 5-phospho-alpha-D-ribose 1-diphosphate. The next 2 helical transmembrane spans lie at 99-119 (IAAG…LAVA) and 121-141 (LVIS…YIAV). Residues Lys150 and Arg167 each contribute to the 5-phospho-alpha-D-ribose 1-diphosphate site. A run of 2 helical transmembrane segments spans residues 153 to 173 (AVLD…AGGV) and 177 to 197 (IPLS…MAAG). Lys198 is a binding site for trans,octa-cis-decaprenyl phosphate. 3 consecutive transmembrane segments (helical) span residues 225 to 245 (LRFV…LWAF), 262 to 282 (SWYA…AVDI), and 298 to 318 (RVLQ…IYFS).

Belongs to the UbiA prenyltransferase family. DPPR synthase subfamily. It depends on Mg(2+) as a cofactor.

The protein resides in the cell inner membrane. The catalysed reaction is trans,octa-cis-decaprenyl phosphate + 5-phospho-alpha-D-ribose 1-diphosphate + H(+) = trans,octa-cis-decaprenylphospho-beta-D-ribofuranose 5-phosphate + diphosphate. It functions in the pathway cell wall biogenesis; cell wall polysaccharide biosynthesis. Its function is as follows. Involved in the biosynthesis of decaprenylphosphoryl arabinose (DPA) a precursor for arabinan synthesis in mycobacterial cell wall biosynthesis. Catalyzes the transfer of a 5-phosphoribosyl residue from phosphoribose diphosphate (PRPP) to decaprenyl phosphate (DP) to form decaprenylphosphoryl-5-phosphoribose (DPPR). This Mycolicibacterium smegmatis (strain ATCC 700084 / mc(2)155) (Mycobacterium smegmatis) protein is Decaprenyl-phosphate phosphoribosyltransferase.